The primary structure comprises 348 residues: S-adenosylmethionine:tRNA ribosyltransferase-isomerase (348 aa).

Belongs to the QueA family. As to quaternary structure, monomer.

It localises to the cytoplasm. The enzyme catalyses 7-aminomethyl-7-carbaguanosine(34) in tRNA + S-adenosyl-L-methionine = epoxyqueuosine(34) in tRNA + adenine + L-methionine + 2 H(+). Its pathway is tRNA modification; tRNA-queuosine biosynthesis. Its function is as follows. Transfers and isomerizes the ribose moiety from AdoMet to the 7-aminomethyl group of 7-deazaguanine (preQ1-tRNA) to give epoxyqueuosine (oQ-tRNA). The sequence is that of S-adenosylmethionine:tRNA ribosyltransferase-isomerase from Polynucleobacter necessarius subsp. necessarius (strain STIR1).